We begin with the raw amino-acid sequence, 580 residues long: ELVRVGHDSLIGEIIRLEGDSATIQVYEETAGLTVNDPVLRTKKPLSCELGPGILGNIFDGIQRPLKTIAIKSRDVYIPRGVSVPALDKDQLWEFQPNKLGVGDNITNGDLYATVFENTLMKHHIALPPGAMGKISYIAPAGQYSLQDTVLELEFQGIKKEFTMLHTWPVRTPRPVASKLAADTPLLTGQRVLDALFPSVLGGTCAIPGAFGCGKTVISQALSKYSNSDTVVYVGCGERGNEMAEVLMDFPQLTMTLPDGREESVMKRTTLVANTSNMPVAAREASIYTGITIAEYFRDMGYNVSMMADSTSRWAEALREISGRLAEMPADSGYPAYLASRLASFYERAGKVQCLGSPDRTGSVTIVGAVSPPGGDFSDPVTSATLSIVQVFWGLDKKLAQRKHFPSVNWLISYSKYSTALEGYYEKFDPGFIDMRTKAREVLQREDDLNEIVQLVGKDALGESDKITLETAKLLREDYLAQNAFTPYDKYCPFYKSVWMMRNIIHFNQLANQAVERAANADGHKITYAVVKSRMGDLFYRLVSQKFEDPAEGEDVLVAKFQKLYDDLTAGFRNLEDEAR.

Residue 209–216 participates in ATP binding; it reads GAFGCGKT.

This sequence belongs to the ATPase alpha/beta chains family. In terms of assembly, V-ATPase is a heteromultimeric enzyme composed of a peripheral catalytic V1 complex (main components: subunits A, B, C, D, E, and F) attached to an integral membrane V0 proton pore complex (main component: the proteolipid protein).

The enzyme catalyses ATP + H2O + 4 H(+)(in) = ADP + phosphate + 5 H(+)(out). Catalytic subunit of the peripheral V1 complex of vacuolar ATPase. V-ATPase vacuolar ATPase is responsible for acidifying a variety of intracellular compartments in eukaryotic cells. This chain is V-type proton ATPase catalytic subunit A, found in Hordeum vulgare (Barley).